The sequence spans 463 residues: Membrane-bound lytic murein transglycosylase F (463 aa).

A signal peptide spans 1–33; sequence MQSQDYKKRLKLQIIIILSIAVMSCGVPNVPTA. The interval 34 to 272 is non-LT domain; the sequence is LSSLLERESI…VLEDKYFGHI (239 aa). An LT domain region spans residues 273-463; the sequence is RQFDYVDSRA…LVWLDEQGKI (191 aa). Glutamate 317 is a catalytic residue.

It in the N-terminal section; belongs to the bacterial solute-binding protein 3 family. The protein in the C-terminal section; belongs to the transglycosylase Slt family.

It is found in the cell outer membrane. The catalysed reaction is Exolytic cleavage of the (1-&gt;4)-beta-glycosidic linkage between N-acetylmuramic acid (MurNAc) and N-acetylglucosamine (GlcNAc) residues in peptidoglycan, from either the reducing or the non-reducing ends of the peptidoglycan chains, with concomitant formation of a 1,6-anhydrobond in the MurNAc residue.. Functionally, murein-degrading enzyme that degrades murein glycan strands and insoluble, high-molecular weight murein sacculi, with the concomitant formation of a 1,6-anhydromuramoyl product. Lytic transglycosylases (LTs) play an integral role in the metabolism of the peptidoglycan (PG) sacculus. Their lytic action creates space within the PG sacculus to allow for its expansion as well as for the insertion of various structures such as secretion systems and flagella. The chain is Membrane-bound lytic murein transglycosylase F from Alteromonas mediterranea (strain DSM 17117 / CIP 110805 / LMG 28347 / Deep ecotype).